Reading from the N-terminus, the 282-residue chain is Nicotianamine synthase-like 5 protein (282 aa).

Belongs to the nicotianamine synthase (NAS)-like family.

This is Nicotianamine synthase-like 5 protein (NAS5) from Hordeum vulgare (Barley).